The primary structure comprises 1228 residues: MSKELDTVEVSIRVPFGKSKRLSTTASRRARVQSIMYFLAFNAASKYYTNYELLHNGVEVDEQQLISELAGNEQTVHLQLRLKPYNTGEVIRHFVTFREYIGFVGDSDDDITSLALSNVAKFRELPLTDIAAASGKTEVADDRQKEEFQVSDAEKAVFTKELDSILELRPSAQDVLKGGSALSKPCLRSLIISGYNPVPAFFRTKGHLLYLQAVTLEGETLHITATVSGFYVNKSSAIKFDPTLKTDAAVCLTLYELLTKHSKKFASHLSQLEAALKAHESVNYVKPISVFLHKTWFPSSLPSNSIDFTEYQLEALNFQTERNFNDEFQAVKETSSEDIVARLEKEKLLNRVIHDFNVAASKGSMEIFYGNMVAMNPDAPRQEHIFLKNNIFYSFVSDLDGHYQDKGGDAAAHAASNQDLHIIKTLLQSNMRSVRHLLTAVVEFGGVRILAQSPVPGILDTAGMKFIKNEKGEEEAIQAKNDITVCYGFDEASNKVIADAEFGSSLDDFAKVFHLKKHEVDGVELKVASTSKGVVGFDKRNYILDLADNNPLDVGFALENFDAVTDEKARYPHRQTLLRRELVEKWWFSKVDGTGSEMEAAYEEGKFSYNPDAYKIEGIEDETVVELSDYLRKEVVPTLVKEVAEGSITAPFNGEHLVDIMHKNGINIRYLGRVIELAEQELEAQRALREAHLQQVEADNKEFTEWEANYLKHIESLIKERQVTIQKLLAEGKEVPAELKEELKLDDKEIRKPHEKEGVAVNNDQLSVLLTLAQIEIISRSIKHVFRKHCHELPAVIIPTFIAFALNLLFGYCYNKAPIAEFPTDGSDIDFAFTKLTREQLLSEISEQAVLRFRYTLPDGWESRYEHTPFALLRPICNKFGIQLLNKEYFFTREQYQNWRQAQDKKIRSKLVEPVSTFSINDLSVRPIIKVATLTTGVSDDCWAQGAYMINEEEKQATALALFSQSIAFREETSGYVHPTVAESYLALSTIHSKLEKKSEAVALCRKACAIYERVCGFDSFEMIRSLNNLAMLEMANDSPYNAALCLKTIMSILSVVIPVNHPATINSYSMLHSMCSSLQNSSAMIKVLNKLGDIIVEIDGHKSLPYAVNESRLANLYASVGEYKRSLACIESCYELFSKELGVNHKTTVECNSWITGVENLIESTSQSKALAASKAAAAAKQGEKKPAQKQQQSAELRDKSIDELMNFINGGSAPAKKSKKKKNAKK.

The 260-residue stretch at 298–557 (PSSLPSNSID…DNNPLDVGFA (260 aa)) folds into the Clu domain. A TPR 1 repeat occupies 486–519 (CYGFDEASNKVIADAEFGSSLDDFAKVFHLKKHE). The stretch at 671-702 (LGRVIELAEQELEAQRALREAHLQQVEADNKE) forms a coiled coil. 2 TPR repeats span residues 982–1015 (AESY…YERV) and 1108–1141 (AVNE…FSKE).

It belongs to the CLU family. In terms of assembly, may associate with the eukaryotic translation initiation factor 3 (eIF-3) complex.

The protein resides in the cytoplasm. MRNA-binding protein involved in proper cytoplasmic distribution of mitochondria. The polypeptide is Clustered mitochondria protein homolog (Eremothecium gossypii (strain ATCC 10895 / CBS 109.51 / FGSC 9923 / NRRL Y-1056) (Yeast)).